A 189-amino-acid polypeptide reads, in one-letter code: ATP synthase subunit b (189 aa).

A helical transmembrane segment spans residues 35 to 54; that stretch reads LLAQMFNFLVLLILLRAVAY.

The protein belongs to the ATPase B chain family. As to quaternary structure, F-type ATPases have 2 components, F(1) - the catalytic core - and F(0) - the membrane proton channel. F(1) has five subunits: alpha(3), beta(3), gamma(1), delta(1), epsilon(1). F(0) has three main subunits: a(1), b(2) and c(10-14). The alpha and beta chains form an alternating ring which encloses part of the gamma chain. F(1) is attached to F(0) by a central stalk formed by the gamma and epsilon chains, while a peripheral stalk is formed by the delta and b chains.

The protein localises to the cell membrane. F(1)F(0) ATP synthase produces ATP from ADP in the presence of a proton or sodium gradient. F-type ATPases consist of two structural domains, F(1) containing the extramembraneous catalytic core and F(0) containing the membrane proton channel, linked together by a central stalk and a peripheral stalk. During catalysis, ATP synthesis in the catalytic domain of F(1) is coupled via a rotary mechanism of the central stalk subunits to proton translocation. Its function is as follows. Component of the F(0) channel, it forms part of the peripheral stalk, linking F(1) to F(0). The polypeptide is ATP synthase subunit b (Desulforamulus reducens (strain ATCC BAA-1160 / DSM 100696 / MI-1) (Desulfotomaculum reducens)).